We begin with the raw amino-acid sequence, 346 residues long: Protein SHI RELATED SEQUENCE 5 (346 aa).

The segment at 7–31 (LGGRDNNSNNNKQDHHQVDKDHHHQ) is disordered. Residues 18–31 (KQDHHQVDKDHHHQ) show a composition bias toward basic and acidic residues. 6 residues coordinate Zn(2+): C125, C128, C136, C141, C145, and C152. Positions 125–152 (CQDCGNQAKKDCPHMRCRTCCKSRGFHC) form a DNA-binding region, zn(2)-C6 fungal-type; degenerate. Polar residues predominate over residues 175–186 (SLQHHSASSRET). Positions 175–215 (SLQHHSASSRETQNAKRLREASGGDNNDDKDHSGGGGSALA) are disordered. Basic and acidic residues predominate over residues 187–207 (QNAKRLREASGGDNNDDKDHS). The Required for homo- and heterodimerization motif lies at 269-272 (IGGH).

It belongs to the SHI protein family.

The protein localises to the nucleus. Functionally, transcription activator that binds DNA on 5'-ACTCTAC-3' and promotes auxin homeostasis-regulating gene expression (e.g. YUC genes), as well as genes affecting stamen development, cell expansion and timing of flowering. Synergistically with other SHI-related proteins, regulates gynoecium, stamen and leaf development in a dose-dependent manner, controlling apical-basal patterning. Promotes style and stigma formation, and influences vascular development during gynoecium development. May also have a role in the formation and/or maintenance of the shoot apical meristem (SAM). The polypeptide is Protein SHI RELATED SEQUENCE 5 (SRS5) (Arabidopsis thaliana (Mouse-ear cress)).